The sequence spans 277 residues: Urease accessory protein UreD (277 aa).

This sequence belongs to the UreD family. In terms of assembly, ureD, UreF and UreG form a complex that acts as a GTP-hydrolysis-dependent molecular chaperone, activating the urease apoprotein by helping to assemble the nickel containing metallocenter of UreC. The UreE protein probably delivers the nickel.

It localises to the cytoplasm. Required for maturation of urease via the functional incorporation of the urease nickel metallocenter. This chain is Urease accessory protein UreD, found in Pseudomonas putida (strain ATCC 47054 / DSM 6125 / CFBP 8728 / NCIMB 11950 / KT2440).